The sequence spans 120 residues: MSYRKLGRTTSQRKALLRDLATDLIINERIETTEARAKELRSVIEKMITLGKRGDLHARRQAAAFIRNEVANSETGQDALQKLFSDIAPRYQDRQGGYTRIMKLGPRRGDGAPMVIIELV.

Belongs to the bacterial ribosomal protein bL17 family. As to quaternary structure, part of the 50S ribosomal subunit. Contacts protein L32.

The polypeptide is Large ribosomal subunit protein bL17 (Geobacillus thermodenitrificans (strain NG80-2)).